The sequence spans 440 residues: Suppressor of cytokine signaling 4 (440 aa).

Over residues 1-11 (MAENSESNSKN) the composition is skewed to polar residues. The disordered stretch occupies residues 1-29 (MAENSESNSKNVDVRPKTSRSRSADRKDG). The span at 12 to 29 (VDVRPKTSRSRSADRKDG) shows a compositional bias: basic and acidic residues. The 96-residue stretch at 286-381 (CYWGVMDKYA…FFEPLLSTPL (96 aa)) folds into the SH2 domain. Positions 376–425 (LLSTPLIRTFPFSLQHICRTVICNCTTYDGIDALPIPSSMKLYLKEYHYK) constitute an SOCS box domain.

It functions in the pathway protein modification; protein ubiquitination. Its function is as follows. SOCS family proteins form part of a classical negative feedback system that regulates cytokine signal transduction. Substrate-recognition component of a SCF-like ECS (Elongin BC-CUL2/5-SOCS-box protein) E3 ubiquitin-protein ligase complex which mediates the ubiquitination and subsequent proteasomal degradation of target proteins. Inhibits EGF signaling by mediating the degradation of the Tyr-phosphorylated EGF receptor/EGFR. This is Suppressor of cytokine signaling 4 (SOCS4) from Bos taurus (Bovine).